Reading from the N-terminus, the 300-residue chain is Porphobilinogen deaminase (300 aa).

C243 is modified (S-(dipyrrolylmethanemethyl)cysteine).

Belongs to the HMBS family. Monomer. Dipyrromethane is required as a cofactor.

It catalyses the reaction 4 porphobilinogen + H2O = hydroxymethylbilane + 4 NH4(+). It participates in porphyrin-containing compound metabolism; protoporphyrin-IX biosynthesis; coproporphyrinogen-III from 5-aminolevulinate: step 2/4. Its function is as follows. Tetrapolymerization of the monopyrrole PBG into the hydroxymethylbilane pre-uroporphyrinogen in several discrete steps. This chain is Porphobilinogen deaminase, found in Clostridium novyi (strain NT).